The following is a 431-amino-acid chain: Enolase (431 aa).

Position 167 (Gln167) interacts with (2R)-2-phosphoglycerate. The active-site Proton donor is the Glu209. Residues Asp246, Glu289, and Asp316 each coordinate Mg(2+). The (2R)-2-phosphoglycerate site is built by Lys341, Arg370, Ser371, and Lys392. Catalysis depends on Lys341, which acts as the Proton acceptor.

The protein belongs to the enolase family. In terms of assembly, component of the RNA degradosome, a multiprotein complex involved in RNA processing and mRNA degradation. Mg(2+) is required as a cofactor.

It is found in the cytoplasm. Its subcellular location is the secreted. The protein resides in the cell surface. It catalyses the reaction (2R)-2-phosphoglycerate = phosphoenolpyruvate + H2O. Its pathway is carbohydrate degradation; glycolysis; pyruvate from D-glyceraldehyde 3-phosphate: step 4/5. Catalyzes the reversible conversion of 2-phosphoglycerate (2-PG) into phosphoenolpyruvate (PEP). It is essential for the degradation of carbohydrates via glycolysis. The protein is Enolase of Shewanella baltica (strain OS223).